The sequence spans 232 residues: Pyridoxal 5'-phosphate synthase subunit PdxS (232 aa).

K23 (schiff-base intermediate with D-ribose 5-phosphate) is an active-site residue. G95 provides a ligand contact to D-ribose 5-phosphate. R107 lines the D-glyceraldehyde 3-phosphate pocket. D-ribose 5-phosphate is bound by residues G156 and 177–178 (GS).

The protein belongs to the PdxS/SNZ family. In the presence of PdxT, forms a dodecamer of heterodimers.

The catalysed reaction is aldehydo-D-ribose 5-phosphate + D-glyceraldehyde 3-phosphate + L-glutamine = pyridoxal 5'-phosphate + L-glutamate + phosphate + 3 H2O + H(+). The protein operates within cofactor biosynthesis; pyridoxal 5'-phosphate biosynthesis. Catalyzes the formation of pyridoxal 5'-phosphate from ribose 5-phosphate (RBP), glyceraldehyde 3-phosphate (G3P) and ammonia. The ammonia is provided by the PdxT subunit. Can also use ribulose 5-phosphate and dihydroxyacetone phosphate as substrates, resulting from enzyme-catalyzed isomerization of RBP and G3P, respectively. The protein is Pyridoxal 5'-phosphate synthase subunit PdxS of Clostridium novyi.